A 139-amino-acid polypeptide reads, in one-letter code: Holo-[acyl-carrier-protein] synthase (139 aa).

Residues D8 and E61 each coordinate Mg(2+).

It belongs to the P-Pant transferase superfamily. AcpS family. It depends on Mg(2+) as a cofactor.

The protein localises to the cytoplasm. The catalysed reaction is apo-[ACP] + CoA = holo-[ACP] + adenosine 3',5'-bisphosphate + H(+). Functionally, transfers the 4'-phosphopantetheine moiety from coenzyme A to a Ser of acyl-carrier-protein. The sequence is that of Holo-[acyl-carrier-protein] synthase from Bradyrhizobium diazoefficiens (strain JCM 10833 / BCRC 13528 / IAM 13628 / NBRC 14792 / USDA 110).